A 253-amino-acid chain; its full sequence is DNA repair protein RecO (253 aa).

It belongs to the RecO family.

Its function is as follows. Involved in DNA repair and RecF pathway recombination. This Streptococcus agalactiae serotype III (strain NEM316) protein is DNA repair protein RecO.